The chain runs to 393 residues: Phosphoglycerate kinase (393 aa).

Residues 21–23 (DFN), Arg-37, 60–63 (HLGR), Arg-119, and Arg-152 each bind substrate. Residues Lys-202, Gly-291, Glu-322, and 348 to 351 (GGDT) each bind ATP.

The protein belongs to the phosphoglycerate kinase family. In terms of assembly, monomer.

The protein resides in the cytoplasm. It carries out the reaction (2R)-3-phosphoglycerate + ATP = (2R)-3-phospho-glyceroyl phosphate + ADP. It functions in the pathway carbohydrate degradation; glycolysis; pyruvate from D-glyceraldehyde 3-phosphate: step 2/5. This is Phosphoglycerate kinase from Coprothermobacter proteolyticus (strain ATCC 35245 / DSM 5265 / OCM 4 / BT).